A 331-amino-acid chain; its full sequence is Pantothenate kinase (331 aa).

109–116 (GSVAVGKS) is an ATP binding site.

It belongs to the prokaryotic pantothenate kinase family.

It localises to the cytoplasm. The catalysed reaction is (R)-pantothenate + ATP = (R)-4'-phosphopantothenate + ADP + H(+). It participates in cofactor biosynthesis; coenzyme A biosynthesis; CoA from (R)-pantothenate: step 1/5. In Rhizobium johnstonii (strain DSM 114642 / LMG 32736 / 3841) (Rhizobium leguminosarum bv. viciae), this protein is Pantothenate kinase.